The chain runs to 49 residues: Large ribosomal subunit protein eL40 (49 aa).

This sequence belongs to the eukaryotic ribosomal protein eL40 family.

This chain is Large ribosomal subunit protein eL40, found in Methanopyrus kandleri (strain AV19 / DSM 6324 / JCM 9639 / NBRC 100938).